The sequence spans 45 residues: Large ribosomal subunit protein bL34 (45 aa).

The disordered stretch occupies residues 22–45 (RMRTKSGQNVIKARRRKGRARLTV). Positions 33–45 (KARRRKGRARLTV) are enriched in basic residues.

Belongs to the bacterial ribosomal protein bL34 family.

This chain is Large ribosomal subunit protein bL34, found in Thermosynechococcus vestitus (strain NIES-2133 / IAM M-273 / BP-1).